A 189-amino-acid polypeptide reads, in one-letter code: GMP synthase [glutamine-hydrolyzing] subunit A (189 aa).

The Glutamine amidotransferase type-1 domain maps to 5 to 189; that stretch reads KILVVNNYGQ…TNFLEICEKY (185 aa). C79 (nucleophile) is an active-site residue. Catalysis depends on residues H166 and E168.

In terms of assembly, heterodimer composed of a glutamine amidotransferase subunit (A) and a GMP-binding subunit (B).

It carries out the reaction XMP + L-glutamine + ATP + H2O = GMP + L-glutamate + AMP + diphosphate + 2 H(+). Its pathway is purine metabolism; GMP biosynthesis; GMP from XMP (L-Gln route): step 1/1. Its function is as follows. Catalyzes the synthesis of GMP from XMP. This chain is GMP synthase [glutamine-hydrolyzing] subunit A, found in Methanosarcina barkeri (strain Fusaro / DSM 804).